The chain runs to 1974 residues: Protein Ycf2 (1974 aa).

A disordered region spans residues 219–246 (SQLKGSSYQSRDHLDSISNEDSEYHNQR). Residue 1308-1315 (GSIGTGRS) participates in ATP binding.

This sequence belongs to the Ycf2 family.

Its subcellular location is the plastid. The protein resides in the chloroplast stroma. Its function is as follows. Probable ATPase of unknown function. Its presence in a non-photosynthetic plant (Epifagus virginiana) and experiments in tobacco indicate that it has an essential function which is probably not related to photosynthesis. This chain is Protein Ycf2, found in Jasminum nudiflorum (Winter jasmine).